A 64-amino-acid polypeptide reads, in one-letter code: Large ribosomal subunit protein bL32 (64 aa).

A disordered region spans residues 1 to 35; that stretch reads MAVQKSRVTPSRRGQRRSHDALTAKQLSTDPTSGE.

This sequence belongs to the bacterial ribosomal protein bL32 family.

The chain is Large ribosomal subunit protein bL32 from Xanthomonas axonopodis pv. citri (strain 306).